A 355-amino-acid chain; its full sequence is Phospho-N-acetylmuramoyl-pentapeptide-transferase (355 aa).

10 consecutive transmembrane segments (helical) span residues 3 to 23 (GVLIAAMVALVVSLLGTPWVI), 56 to 76 (VIIVATLVGYFLAHLVTGIGF), 80 to 100 (GLLVLLVMTGLGIVGFLDDYI), 120 to 140 (AAVALAFGLLAVRFKNHAGLL), 152 to 172 (TSLTVGIIGFPLLAWIIIAAT), 185 to 205 (LAAGTSAMVFGAYVVISFWQF), 224 to 244 (PLDVALVAAAAMGACFGFLWW), 251 to 271 (IFMGDTGSLALGGAFASIAIV), 276 to 296 (LLLVVLGGLFVIETLSVMIQV), and 330 to 350 (FWIVSGLAVAFGLGLFYAEFL).

The protein belongs to the glycosyltransferase 4 family. MraY subfamily. The cofactor is Mg(2+).

It is found in the cell membrane. It carries out the reaction UDP-N-acetyl-alpha-D-muramoyl-L-alanyl-gamma-D-glutamyl-meso-2,6-diaminopimeloyl-D-alanyl-D-alanine + di-trans,octa-cis-undecaprenyl phosphate = di-trans,octa-cis-undecaprenyl diphospho-N-acetyl-alpha-D-muramoyl-L-alanyl-D-glutamyl-meso-2,6-diaminopimeloyl-D-alanyl-D-alanine + UMP. The protein operates within cell wall biogenesis; peptidoglycan biosynthesis. Its function is as follows. Catalyzes the initial step of the lipid cycle reactions in the biosynthesis of the cell wall peptidoglycan: transfers peptidoglycan precursor phospho-MurNAc-pentapeptide from UDP-MurNAc-pentapeptide onto the lipid carrier undecaprenyl phosphate, yielding undecaprenyl-pyrophosphoryl-MurNAc-pentapeptide, known as lipid I. This chain is Phospho-N-acetylmuramoyl-pentapeptide-transferase, found in Frankia alni (strain DSM 45986 / CECT 9034 / ACN14a).